A 459-amino-acid polypeptide reads, in one-letter code: Ribulose bisphosphate carboxylase (459 aa).

A substrate-binding site is contributed by Asn111. The active-site Proton acceptor is Lys166. Lys168 lines the substrate pocket. Mg(2+) contacts are provided by Lys191, Asp193, and Glu194. Lys191 bears the N6-carboxylysine mark. His287 (proton acceptor) is an active-site residue. 3 residues coordinate substrate: Arg288, His321, and Ser368.

The protein belongs to the RuBisCO large chain family. Type II subfamily. In terms of assembly, homodimer. Mg(2+) is required as a cofactor.

It carries out the reaction 2 (2R)-3-phosphoglycerate + 2 H(+) = D-ribulose 1,5-bisphosphate + CO2 + H2O. The enzyme catalyses D-ribulose 1,5-bisphosphate + O2 = 2-phosphoglycolate + (2R)-3-phosphoglycerate + 2 H(+). RuBisCO catalyzes two reactions: the carboxylation of D-ribulose 1,5-bisphosphate, the primary event in carbon dioxide fixation, as well as the oxidative fragmentation of the pentose substrate. Both reactions occur simultaneously and in competition at the same active site. In Albidiferax ferrireducens (strain ATCC BAA-621 / DSM 15236 / T118) (Rhodoferax ferrireducens), this protein is Ribulose bisphosphate carboxylase.